Consider the following 241-residue polypeptide: Small ribosomal subunit protein uS2 (241 aa).

It belongs to the universal ribosomal protein uS2 family.

In Klebsiella pneumoniae subsp. pneumoniae (strain ATCC 700721 / MGH 78578), this protein is Small ribosomal subunit protein uS2.